We begin with the raw amino-acid sequence, 455 residues long: Kynurenine 3-monooxygenase (455 aa).

Belongs to the aromatic-ring hydroxylase family. KMO subfamily. FAD serves as cofactor.

The enzyme catalyses L-kynurenine + NADPH + O2 + H(+) = 3-hydroxy-L-kynurenine + NADP(+) + H2O. The protein operates within cofactor biosynthesis; NAD(+) biosynthesis; quinolinate from L-kynurenine: step 1/3. Catalyzes the hydroxylation of L-kynurenine (L-Kyn) to form 3-hydroxy-L-kynurenine (L-3OHKyn). Required for synthesis of quinolinic acid. The protein is Kynurenine 3-monooxygenase of Xanthomonas axonopodis pv. citri (strain 306).